The chain runs to 201 residues: Large ribosomal subunit protein uL4 (201 aa).

A disordered region spans residues 42-67; sequence GNSAQKTRSEVSGGGKKPWNQKGTGR.

It belongs to the universal ribosomal protein uL4 family. In terms of assembly, part of the 50S ribosomal subunit.

One of the primary rRNA binding proteins, this protein initially binds near the 5'-end of the 23S rRNA. It is important during the early stages of 50S assembly. It makes multiple contacts with different domains of the 23S rRNA in the assembled 50S subunit and ribosome. In terms of biological role, forms part of the polypeptide exit tunnel. In Legionella pneumophila (strain Corby), this protein is Large ribosomal subunit protein uL4.